Consider the following 44-residue polypeptide: Somatoliberin (44 aa).

The residue at position 44 (Leu-44) is a Leucine amide.

The protein belongs to the glucagon family.

It localises to the secreted. Its function is as follows. GRF is released by the hypothalamus and acts on the adenohypophyse to stimulate the secretion of growth hormone. The protein is Somatoliberin (GHRH) of Ovis aries (Sheep).